Reading from the N-terminus, the 94-residue chain is Small polypeptide ROTUNDIFOLIA LIKE 1 (94 aa).

Residues 1–13 (MRQCASASSSTSR) are compositionally biased toward polar residues. The disordered stretch occupies residues 1–26 (MRQCASASSSTSRPPEAAGEEGKRRR). A required for DVL/RTFL small polypeptide activity region spans residues 28 to 59 (RRGWLLQAAAREQRSRFYIFRRCVAMLLCWYK). Residues 63 to 82 (ITPYNVVPLGIYGLVWFATM) form a helical membrane-spanning segment.

It belongs to the DVL/RTFL small polypeptides family.

The protein resides in the cell membrane. Functionally, small polypeptide acting as a regulatory molecule which coordinates cellular responses required for differentiation, growth and development, probably by restricting polar cell proliferation in lateral organs. The polypeptide is Small polypeptide ROTUNDIFOLIA LIKE 1 (Oryza sativa subsp. japonica (Rice)).